A 350-amino-acid polypeptide reads, in one-letter code: Tsukushi (350 aa).

The N-terminal stretch at methionine 1–serine 17 is a signal peptide. The 42-residue stretch at serine 18–leucine 59 folds into the LRRNT domain. LRR repeat units lie at residues aspartate 60–glycine 81, threonine 86–lysine 107, tyrosine 110–tyrosine 131, arginine 133–leucine 154, arginine 159–proline 180, asparagine 183–isoleucine 203, proline 204–glycine 225, glycine 228–threonine 250, serine 253–glycine 275, and serine 278–asparagine 299. N-linked (GlcNAc...) asparagine glycans are attached at residues asparagine 75 and asparagine 91.

Interacts with bmp4. Interacts with dll1 (via extracellular region). Interacts with fgf8; inhibits fgf8 signaling. Interacts with nodal2/Xnr2; enhances nodal2 activity.

The protein localises to the secreted. Functionally, contributes to various developmental events through its interactions with multiple signaling pathways. Dorsalizing factor which functions as an inhibitor of bone morphogenetic proteins (BMP) during gastrulation. Promotes dll1-dependent activation of Notch signaling and is required for neural crest formation. Induces endoderm and dorsal mesoderm formation by enhancing nodal2/Xnr2 activity while inhibiting ventrolateral mesoderm formation through inhibition of fgf8. This is Tsukushi (tsku) from Xenopus tropicalis (Western clawed frog).